The sequence spans 539 residues: Serine/threonine-protein kinase 35 (539 aa).

The interval 103 to 161 (ITIQGPAPPHLGARRRDEARGARAAPLLLPPPPAAMETGKENGARRGTKSPERKRRSPV) is disordered. Basic residues predominate over residues 148–160 (RGTKSPERKRRSP). Positions 207 to 535 (YSLLAEIGRG…FELETRMDQV (329 aa)) constitute a Protein kinase domain. Residues 213 to 221 (IGRGSYGVV) and Lys236 each bind ATP. Asp365 acts as the Proton acceptor in catalysis.

The protein belongs to the protein kinase superfamily. Ser/Thr protein kinase family. As to quaternary structure, interacts with PDLIM1/CLP-36. Post-translationally, autophosphorylated.

Its subcellular location is the nucleus. It localises to the nucleolus. The protein resides in the cytoplasm. It carries out the reaction L-seryl-[protein] + ATP = O-phospho-L-seryl-[protein] + ADP + H(+). It catalyses the reaction L-threonyl-[protein] + ATP = O-phospho-L-threonyl-[protein] + ADP + H(+). The protein is Serine/threonine-protein kinase 35 (Stk35) of Mus musculus (Mouse).